Here is a 328-residue protein sequence, read N- to C-terminus: Ketol-acid reductoisomerase (NADP(+)) (328 aa).

Residues 1–179 enclose the KARI N-terminal Rossmann domain; that stretch reads MRVLYERDGD…GGGAAGIIET (179 aa). Residues 24–27, arginine 47, and serine 51 contribute to the NADP(+) site; that span reads YGSQ. The active site involves histidine 106. Glycine 132 lines the NADP(+) pocket. A KARI C-terminal knotted domain is found at 180–325; the sequence is TFVDETETDL…ARLRSRMTCA (146 aa). Aspartate 188, glutamate 192, glutamate 224, and glutamate 228 together coordinate Mg(2+). Substrate is bound at residue serine 249.

It belongs to the ketol-acid reductoisomerase family. Mg(2+) serves as cofactor.

It catalyses the reaction (2R)-2,3-dihydroxy-3-methylbutanoate + NADP(+) = (2S)-2-acetolactate + NADPH + H(+). It carries out the reaction (2R,3R)-2,3-dihydroxy-3-methylpentanoate + NADP(+) = (S)-2-ethyl-2-hydroxy-3-oxobutanoate + NADPH + H(+). It participates in amino-acid biosynthesis; L-isoleucine biosynthesis; L-isoleucine from 2-oxobutanoate: step 2/4. The protein operates within amino-acid biosynthesis; L-valine biosynthesis; L-valine from pyruvate: step 2/4. Its function is as follows. Involved in the biosynthesis of branched-chain amino acids (BCAA). Catalyzes an alkyl-migration followed by a ketol-acid reduction of (S)-2-acetolactate (S2AL) to yield (R)-2,3-dihydroxy-isovalerate. In the isomerase reaction, S2AL is rearranged via a Mg-dependent methyl migration to produce 3-hydroxy-3-methyl-2-ketobutyrate (HMKB). In the reductase reaction, this 2-ketoacid undergoes a metal-dependent reduction by NADPH to yield (R)-2,3-dihydroxy-isovalerate. The sequence is that of Ketol-acid reductoisomerase (NADP(+)) from Tremblaya princeps.